Here is a 422-residue protein sequence, read N- to C-terminus: Glycine amidinotransferase, mitochondrial (422 aa).

The N-terminal 37 residues, 1–37 (MLRVRCLRGGSRGAEAVHYIGSMLRKSFVGWVQRSFQ), are a transit peptide targeting the mitochondrion. Active-site residues include Asp253 and His302. The active-site Amidino-cysteine intermediate is Cys406.

This sequence belongs to the amidinotransferase family. Homodimer. Ubiquitously expressed in adult tissues, with highest levels in muscle and intermediate levels in eye, heart, liver, stomach and testis. In stage 28 embryos, expression is higher in the dorsal and ventral parts of the trunk than in the head. In middle gastrulae, expression is highest around the yolk plug, while in stage 15 and tailbud stage embryos, expression is largely restricted to the region around the presumptive notochord and gut.

The protein resides in the mitochondrion inner membrane. The catalysed reaction is L-arginine + glycine = guanidinoacetate + L-ornithine. It participates in amine and polyamine biosynthesis; creatine biosynthesis; creatine from L-arginine and glycine: step 1/2. Its function is as follows. Catalyzes the biosynthesis of guanidinoacetate, the immediate precursor of creatine. Creatine plays a vital role in energy metabolism in muscle tissues. May play a role in embryonic and central nervous system development. This chain is Glycine amidinotransferase, mitochondrial, found in Xenopus laevis (African clawed frog).